Consider the following 238-residue polypeptide: Cysteine-rich venom protein kaouthin-2 (238 aa).

Positions 1 to 19 (MIAFIVLLSLAAVLQQSSG) are cleaved as a signal peptide. The propeptide occupies 20-25 (TVDFAS). One can recognise an SCP domain in the interval 38–164 (VDKHNALRRS…SSKYLYVCQY (127 aa)). 8 disulfide bridges follow: cysteine 75–cysteine 153, cysteine 92–cysteine 165, cysteine 148–cysteine 162, cysteine 184–cysteine 191, cysteine 187–cysteine 196, cysteine 200–cysteine 233, cysteine 209–cysteine 227, and cysteine 218–cysteine 231. The region spanning 200–233 (CKHHNVFSNCQSLAKQNACQTEWMKSKCAASCFC) is the ShKT domain.

As to expression, expressed by the venom gland.

The protein resides in the secreted. The protein is Cysteine-rich venom protein kaouthin-2 of Naja kaouthia (Monocled cobra).